Reading from the N-terminus, the 208-residue chain is MIRSTKIVRHLAVRPDRVVDTITLDHHARHRRRVAMTADGGLEFLLDLDRAAVLDHGDALELEDGRLVQVKAADEQLVEITTFNPVRLMRAAWHIGNRHIPAEITEEAIYIVQDPVLEAMLRGLGAAVKPVVRPFKPERGAYEAAEAHGHGQAHAHDHHDHDHHDHGHDHAHHDHAHHDHAHDHHGHDHAHDHAHGASCGCGHTHHHD.

A disordered region spans residues 145–195 (AEAHGHGQAHAHDHHDHDHHDHGHDHAHHDHAHHDHAHDHHGHDHAHDHAH).

Belongs to the UreE family.

It localises to the cytoplasm. Its function is as follows. Involved in urease metallocenter assembly. Binds nickel. Probably functions as a nickel donor during metallocenter assembly. The sequence is that of Urease accessory protein UreE from Azorhizobium caulinodans (strain ATCC 43989 / DSM 5975 / JCM 20966 / LMG 6465 / NBRC 14845 / NCIMB 13405 / ORS 571).